A 147-amino-acid chain; its full sequence is Heavy metal-dependent transcription regulator 2 (147 aa).

One can recognise an HTH merR-type domain in the interval Met1–Leu69. The H-T-H motif DNA-binding region spans Ile3–Gln22.

It is found in the cytoplasm. Functionally, transcriptional regulator involved in acid tolerance. Binds copper. This Rhizobium meliloti (strain 1021) (Ensifer meliloti) protein is Heavy metal-dependent transcription regulator 2 (hmrR2).